We begin with the raw amino-acid sequence, 181 residues long: Isopentenyl-diphosphate Delta-isomerase (181 aa).

Mn(2+) is bound by residues histidine 25 and histidine 32. Residues leucine 30–leucine 164 enclose the Nudix hydrolase domain. The active site involves cysteine 67. Histidine 69 provides a ligand contact to Mn(2+). Position 87 (glutamate 87) interacts with Mg(2+). Residues glutamate 114 and glutamate 116 each coordinate Mn(2+). Glutamate 116 is an active-site residue.

Belongs to the IPP isomerase type 1 family. In terms of assembly, homodimer. It depends on Mg(2+) as a cofactor. The cofactor is Mn(2+).

It is found in the cytoplasm. The enzyme catalyses isopentenyl diphosphate = dimethylallyl diphosphate. Its pathway is isoprenoid biosynthesis; dimethylallyl diphosphate biosynthesis; dimethylallyl diphosphate from isopentenyl diphosphate: step 1/1. Catalyzes the 1,3-allylic rearrangement of the homoallylic substrate isopentenyl (IPP) to its highly electrophilic allylic isomer, dimethylallyl diphosphate (DMAPP). In Citrobacter koseri (strain ATCC BAA-895 / CDC 4225-83 / SGSC4696), this protein is Isopentenyl-diphosphate Delta-isomerase.